The following is a 384-amino-acid chain: Cell division protein FtsZ (384 aa).

Residues 20 to 24 (GGGSN), 107 to 109 (GTG), glutamate 138, arginine 142, and asparagine 186 contribute to the GTP site.

The protein belongs to the FtsZ family. In terms of assembly, homodimer. Polymerizes to form a dynamic ring structure in a strictly GTP-dependent manner. Interacts directly with several other division proteins.

It is found in the cytoplasm. In terms of biological role, essential cell division protein that forms a contractile ring structure (Z ring) at the future cell division site. The regulation of the ring assembly controls the timing and the location of cell division. One of the functions of the FtsZ ring is to recruit other cell division proteins to the septum to produce a new cell wall between the dividing cells. Binds GTP and shows GTPase activity. This is Cell division protein FtsZ from Buchnera aphidicola subsp. Acyrthosiphon pisum (strain APS) (Acyrthosiphon pisum symbiotic bacterium).